Consider the following 211-residue polypeptide: Imidazole glycerol phosphate synthase subunit HisH (211 aa).

In terms of domain architecture, Glutamine amidotransferase type-1 spans 3-211 (VIAVIDYDMG…VSQIKAPVLV (209 aa)). Catalysis depends on cysteine 81, which acts as the Nucleophile. Residues histidine 186 and glutamate 188 contribute to the active site.

Heterodimer of HisH and HisF.

The protein localises to the cytoplasm. The catalysed reaction is 5-[(5-phospho-1-deoxy-D-ribulos-1-ylimino)methylamino]-1-(5-phospho-beta-D-ribosyl)imidazole-4-carboxamide + L-glutamine = D-erythro-1-(imidazol-4-yl)glycerol 3-phosphate + 5-amino-1-(5-phospho-beta-D-ribosyl)imidazole-4-carboxamide + L-glutamate + H(+). It catalyses the reaction L-glutamine + H2O = L-glutamate + NH4(+). Its pathway is amino-acid biosynthesis; L-histidine biosynthesis; L-histidine from 5-phospho-alpha-D-ribose 1-diphosphate: step 5/9. Its function is as follows. IGPS catalyzes the conversion of PRFAR and glutamine to IGP, AICAR and glutamate. The HisH subunit catalyzes the hydrolysis of glutamine to glutamate and ammonia as part of the synthesis of IGP and AICAR. The resulting ammonia molecule is channeled to the active site of HisF. The sequence is that of Imidazole glycerol phosphate synthase subunit HisH from Cyanothece sp. (strain PCC 7425 / ATCC 29141).